Here is a 469-residue protein sequence, read N- to C-terminus: 3-isopropylmalate dehydratase large subunit (469 aa).

[4Fe-4S] cluster contacts are provided by C347, C410, and C413.

The protein belongs to the aconitase/IPM isomerase family. LeuC type 1 subfamily. Heterodimer of LeuC and LeuD. The cofactor is [4Fe-4S] cluster.

The enzyme catalyses (2R,3S)-3-isopropylmalate = (2S)-2-isopropylmalate. The protein operates within amino-acid biosynthesis; L-leucine biosynthesis; L-leucine from 3-methyl-2-oxobutanoate: step 2/4. Functionally, catalyzes the isomerization between 2-isopropylmalate and 3-isopropylmalate, via the formation of 2-isopropylmaleate. This is 3-isopropylmalate dehydratase large subunit from Burkholderia pseudomallei (strain 1106a).